The chain runs to 444 residues: 3-phosphoshikimate 1-carboxyvinyltransferase (444 aa).

3-phosphoshikimate-binding residues include lysine 29, serine 30, and arginine 34. Phosphoenolpyruvate is bound at residue lysine 29. Positions 103 and 132 each coordinate phosphoenolpyruvate. 3-phosphoshikimate-binding residues include serine 177, glutamine 179, aspartate 329, and lysine 356. Residue glutamine 179 participates in phosphoenolpyruvate binding. Residue aspartate 329 is the Proton acceptor of the active site. Residues arginine 360 and arginine 402 each contribute to the phosphoenolpyruvate site.

The protein belongs to the EPSP synthase family. In terms of assembly, monomer.

It is found in the cytoplasm. The catalysed reaction is 3-phosphoshikimate + phosphoenolpyruvate = 5-O-(1-carboxyvinyl)-3-phosphoshikimate + phosphate. It participates in metabolic intermediate biosynthesis; chorismate biosynthesis; chorismate from D-erythrose 4-phosphate and phosphoenolpyruvate: step 6/7. Its function is as follows. Catalyzes the transfer of the enolpyruvyl moiety of phosphoenolpyruvate (PEP) to the 5-hydroxyl of shikimate-3-phosphate (S3P) to produce enolpyruvyl shikimate-3-phosphate and inorganic phosphate. The protein is 3-phosphoshikimate 1-carboxyvinyltransferase of Prochlorococcus marinus (strain NATL2A).